The sequence spans 158 residues: Endoribonuclease YbeY (158 aa).

Positions 118, 122, and 128 each coordinate Zn(2+).

Belongs to the endoribonuclease YbeY family. Requires Zn(2+) as cofactor.

The protein resides in the cytoplasm. In terms of biological role, single strand-specific metallo-endoribonuclease involved in late-stage 70S ribosome quality control and in maturation of the 3' terminus of the 16S rRNA. This is Endoribonuclease YbeY from Bartonella henselae (strain ATCC 49882 / DSM 28221 / CCUG 30454 / Houston 1) (Rochalimaea henselae).